We begin with the raw amino-acid sequence, 510 residues long: Glycogen synthase (510 aa).

K18 is an ADP-alpha-D-glucose binding site.

The protein belongs to the glycosyltransferase 1 family. Bacterial/plant glycogen synthase subfamily.

It carries out the reaction [(1-&gt;4)-alpha-D-glucosyl](n) + ADP-alpha-D-glucose = [(1-&gt;4)-alpha-D-glucosyl](n+1) + ADP + H(+). It functions in the pathway glycan biosynthesis; glycogen biosynthesis. In terms of biological role, synthesizes alpha-1,4-glucan chains using ADP-glucose. This Bordetella bronchiseptica (strain ATCC BAA-588 / NCTC 13252 / RB50) (Alcaligenes bronchisepticus) protein is Glycogen synthase.